Reading from the N-terminus, the 506-residue chain is EPTC-inducible aldehyde dehydrogenase (506 aa).

Residue 219–225 coordinates NAD(+); that stretch reads GFGVEAG. Catalysis depends on residues glutamate 263 and cysteine 302.

Belongs to the aldehyde dehydrogenase family.

It catalyses the reaction an aldehyde + NAD(+) + H2O = a carboxylate + NADH + 2 H(+). Functionally, degrades all aldehydes potentially generated by N dealkylation of thiocarbamates and may also participate in ethanolamine metabolism and further assimilation of degradation products by thiocarbamate-induced cytochrome P-450. The polypeptide is EPTC-inducible aldehyde dehydrogenase (thcA) (Rhodococcus erythropolis (Arthrobacter picolinophilus)).